The following is a 2378-amino-acid chain: Serine/threonine-protein kinase ATM (2378 aa).

The 523-residue stretch at 1415 to 1937 (LSARKRNTMM…LHTILMYDDE (523 aa)) folds into the FAT domain. Residues 2044–2366 (WKDVFTIADG…LLREATSADN (323 aa)) form the PI3K/PI4K catalytic domain. A G-loop region spans residues 2050–2056 (IADGIST). The tract at residues 2218-2226 (GLGDRHASN) is catalytic loop. The interval 2238-2263 (HIDLGMILEYSKRTLPVPEQVPFRIT) is activation loop. Residues 2346–2378 (TAQSSNLQIRRLLREATSADNLSRMFCGWMPFL) enclose the FATC domain.

It belongs to the PI3/PI4-kinase family. ATM subfamily.

Its subcellular location is the nucleus. The enzyme catalyses L-seryl-[protein] + ATP = O-phospho-L-seryl-[protein] + ADP + H(+). The catalysed reaction is L-threonyl-[protein] + ATP = O-phospho-L-threonyl-[protein] + ADP + H(+). Its function is as follows. Serine/threonine protein kinase which activates checkpoint signaling in the presence of DNA double strand breaks (DSBs) and other forms of DNA damage induced by ionizing radiation and other genotoxic stresses such as UV. Plays a role in maintaining genome stability. The chain is Serine/threonine-protein kinase ATM (atm-1) from Caenorhabditis elegans.